Consider the following 207-residue polypeptide: Large ribosomal subunit protein bL25 (207 aa).

A disordered region spans residues 1 to 20; sequence MANHQIKAQRRKDEGKGASR.

Belongs to the bacterial ribosomal protein bL25 family. CTC subfamily. As to quaternary structure, part of the 50S ribosomal subunit; part of the 5S rRNA/L5/L18/L25 subcomplex. Contacts the 5S rRNA. Binds to the 5S rRNA independently of L5 and L18.

This is one of the proteins that binds to the 5S RNA in the ribosome where it forms part of the central protuberance. The chain is Large ribosomal subunit protein bL25 from Xylella fastidiosa (strain M12).